Here is a 319-residue protein sequence, read N- to C-terminus: tRNA dimethylallyltransferase (319 aa).

10–17 (GPTAVGKT) serves as a coordination point for ATP. A substrate-binding site is contributed by 12 to 17 (TAVGKT). Residues 35 to 38 (DSMQ) are interaction with substrate tRNA.

Belongs to the IPP transferase family. Monomer. The cofactor is Mg(2+).

The enzyme catalyses adenosine(37) in tRNA + dimethylallyl diphosphate = N(6)-dimethylallyladenosine(37) in tRNA + diphosphate. In terms of biological role, catalyzes the transfer of a dimethylallyl group onto the adenine at position 37 in tRNAs that read codons beginning with uridine, leading to the formation of N6-(dimethylallyl)adenosine (i(6)A). This is tRNA dimethylallyltransferase from Symbiobacterium thermophilum (strain DSM 24528 / JCM 14929 / IAM 14863 / T).